A 183-amino-acid polypeptide reads, in one-letter code: MVTRVVLQQADISRALTRISHEILESNRGIDGLAILGIPTRGVVLARRIAESIQRIEQEAVGASADIVGALDVTMYRDDLARNPTRAPQPTSLPGPIDGKTVVLVDDVLFSGRTIRAALDALSDLGRPRAVRLAVLVDRGHRELPIRADFVGKNLPSAASERIFVRFAEVDGQDAVTIEEGGA.

The PRPP-binding signature appears at 102-114; sequence VVLVDDVLFSGRT.

Belongs to the purine/pyrimidine phosphoribosyltransferase family. PyrR subfamily.

The catalysed reaction is UMP + diphosphate = 5-phospho-alpha-D-ribose 1-diphosphate + uracil. Its function is as follows. Regulates the transcription of the pyrimidine nucleotide (pyr) operon in response to exogenous pyrimidines. Functionally, also displays a weak uracil phosphoribosyltransferase activity which is not physiologically significant. This is Bifunctional protein PyrR from Leifsonia xyli subsp. xyli (strain CTCB07).